We begin with the raw amino-acid sequence, 159 residues long: uncharacterized protein (159 aa).

The protein to M.jannaschii MJECL20.

This is an uncharacterized protein from Methanocaldococcus jannaschii (strain ATCC 43067 / DSM 2661 / JAL-1 / JCM 10045 / NBRC 100440) (Methanococcus jannaschii).